Reading from the N-terminus, the 88-residue chain is Small ribosomal subunit protein uS15 (88 aa).

This sequence belongs to the universal ribosomal protein uS15 family. Part of the 30S ribosomal subunit. Forms a bridge to the 50S subunit in the 70S ribosome, contacting the 23S rRNA.

Functionally, one of the primary rRNA binding proteins, it binds directly to 16S rRNA where it helps nucleate assembly of the platform of the 30S subunit by binding and bridging several RNA helices of the 16S rRNA. In terms of biological role, forms an intersubunit bridge (bridge B4) with the 23S rRNA of the 50S subunit in the ribosome. The sequence is that of Small ribosomal subunit protein uS15 from Syntrophus aciditrophicus (strain SB).